Consider the following 468-residue polypeptide: Chromosomal replication initiator protein DnaA (468 aa).

Positions 1-84 (MSSSLWLQCM…RFEVGSRPVA (84 aa)) are domain I, interacts with DnaA modulators. The tract at residues 81–113 (RPVAAPKPAPTRTPADVAAESSAPAQLQARKPV) is disordered. The segment at 84-131 (AAPKPAPTRTPADVAAESSAPAQLQARKPVHKTWDDDAQAIADINHRS) is domain II. Positions 132 to 348 (NVNPKHKFNN…GALNRVIANA (217 aa)) are domain III, AAA+ region. Gly176, Gly178, Lys179, and Thr180 together coordinate ATP. A domain IV, binds dsDNA region spans residues 349–468 (NFTGRPITID…YSNLIRTLSS (120 aa)).

This sequence belongs to the DnaA family. In terms of assembly, oligomerizes as a right-handed, spiral filament on DNA at oriC.

Its subcellular location is the cytoplasm. In terms of biological role, plays an essential role in the initiation and regulation of chromosomal replication. ATP-DnaA binds to the origin of replication (oriC) to initiate formation of the DNA replication initiation complex once per cell cycle. Binds the DnaA box (a 9 base pair repeat at the origin) and separates the double-stranded (ds)DNA. Forms a right-handed helical filament on oriC DNA; dsDNA binds to the exterior of the filament while single-stranded (ss)DNA is stabiized in the filament's interior. The ATP-DnaA-oriC complex binds and stabilizes one strand of the AT-rich DNA unwinding element (DUE), permitting loading of DNA polymerase. After initiation quickly degrades to an ADP-DnaA complex that is not apt for DNA replication. Binds acidic phospholipids. This Vibrio vulnificus (strain CMCP6) protein is Chromosomal replication initiator protein DnaA.